We begin with the raw amino-acid sequence, 243 residues long: uncharacterized protein (243 aa).

This is an uncharacterized protein from Orgyia pseudotsugata multicapsid polyhedrosis virus (OpMNPV).